An 877-amino-acid chain; its full sequence is Lipophilic envelope-spanning tunnel protein B (877 aa).

The Cytoplasmic segment spans residues 1 to 19 (MSQETPASTTEAQIKNKRR). Residues 20 to 40 (ISPFWLLPFIALMIASWLIWD) traverse the membrane as a helical segment. The Periplasmic portion of the chain corresponds to 41-877 (SYQDRGNTVT…WREWGTALPK (837 aa)). MCE/MlaD stretches follow at residues 46–149 (GNTV…VALD), 160–272 (DLMI…GLYE), 279–382 (RGVI…VVPG), 391–499 (DVLT…PLYA), 515–625 (TTVS…ILYA), 634–737 (GGQI…LQEA), and 746–862 (DGLS…LLQE).

Belongs to the PqiB family. As to quaternary structure, homohexamer. May interact with LetA in the inner membrane. May also interact with partners in the outer membrane.

The protein resides in the cell inner membrane. Functionally, forms a tunnel that spans the entire periplasmic space. Is probably involved in the transport of lipids between the inner membrane and the outer membrane through the tunnel. Forms a dynamic tunnel sufficiently long to mediate lipid transport directly between the two membranes without the need for a shuttle protein. Binds phospholipids. Lipids bind inside the tunnel. Required for outer membrane homeostasis. Contributes to membrane integrity. The chain is Lipophilic envelope-spanning tunnel protein B from Escherichia coli (strain K12).